Reading from the N-terminus, the 391-residue chain is Phosphoglycerate kinase (391 aa).

Substrate contacts are provided by residues 21–23 (DLN), R36, 59–62 (HLGR), R113, and R146. Residues K197, E319, and 345-348 (GGDT) each bind ATP.

The protein belongs to the phosphoglycerate kinase family. As to quaternary structure, monomer.

The protein localises to the cytoplasm. It catalyses the reaction (2R)-3-phosphoglycerate + ATP = (2R)-3-phospho-glyceroyl phosphate + ADP. It participates in carbohydrate degradation; glycolysis; pyruvate from D-glyceraldehyde 3-phosphate: step 2/5. The protein is Phosphoglycerate kinase of Shewanella baltica (strain OS195).